A 314-amino-acid polypeptide reads, in one-letter code: MATRGRHRSRTSGTSSEPMTLRAPPDERDLDSLRSFGVVNLDKPPGPSAHQVAAWIRDATGQDRVAHGGTLDPKVTGCLPVLLGDAARMAQVFDNAVKEYVTVLELHDQAPADIADIVAEFETDIYQKPPRKSAVKRQLRSRRIHSLDILEQGDRRLLLRVRCASGTYIRKLCHDIGLAAGTGAHMGDLRRTATGTFDDGSLSTMHDLVDALAFAADGDEAQLREIIQPAERALSHLPRVTIAPSAAREVAEGAPVYAPGVIETGPAEVGDATPEIDSQVVSVTPDGAAVCLGTLVSDPDADSGLVVELDRMLV.

Basic residues predominate over residues 1–10 (MATRGRHRSR). The disordered stretch occupies residues 1–30 (MATRGRHRSRTSGTSSEPMTLRAPPDERDL). Catalysis depends on D72, which acts as the Nucleophile. The region spanning 237 to 314 (LPRVTIAPSA…LVVELDRMLV (78 aa)) is the PUA domain.

The protein belongs to the pseudouridine synthase TruB family. Type 2 subfamily.

It catalyses the reaction uridine(55) in tRNA = pseudouridine(55) in tRNA. Functionally, could be responsible for synthesis of pseudouridine from uracil-55 in the psi GC loop of transfer RNAs. The protein is Probable tRNA pseudouridine synthase B of Haloarcula marismortui (strain ATCC 43049 / DSM 3752 / JCM 8966 / VKM B-1809) (Halobacterium marismortui).